Here is a 384-residue protein sequence, read N- to C-terminus: BarH-like 2 homeobox protein (384 aa).

3 disordered regions span residues 1–134 (MTAM…APRT), 154–235 (CAPY…ARTA), and 364–384 (PGGQ…PHPR). Composition is skewed to low complexity over residues 101-110 (VPAQSLQPSP) and 119-134 (QSAA…APRT). Polar residues predominate over residues 157–175 (YSTSVSSPHHTPKQESNAA). A compositionally biased stretch (basic and acidic residues) spans 177–217 (ESFRPKLEQEDGKTKLDKREDPQSDIKCHGTKEEGDREITS). Residues 229–288 (PRKARTAFSDHQLNQLERSFERQKYLSVQDRMDLAAALNLTDTQVKTWYQNRRTKWKRQT) constitute a DNA-binding region (homeobox).

The protein belongs to the BAR homeobox family.

It is found in the nucleus. In terms of biological role, potential regulator of neural basic helix-loop-helix genes. It may down-regulate expression of ASCL1 and, within the thalamus, up-regulate NGN2, thereby regulating distinct patterns of neuronal differentiation. The polypeptide is BarH-like 2 homeobox protein (Barhl2) (Mus musculus (Mouse)).